A 393-amino-acid chain; its full sequence is Pyridoxamine--pyruvate transaminase (393 aa).

Residues glutamate 68, tyrosine 95, and threonine 146 each coordinate pyridoxal 5'-phosphate. Lysine 197 is subject to N6-(pyridoxal phosphate)lysine. Arginine 345 is a binding site for pyridoxal 5'-phosphate.

This sequence belongs to the class-V pyridoxal-phosphate-dependent aminotransferase family. Homotetramer. It depends on pyridoxal 5'-phosphate as a cofactor.

It carries out the reaction pyridoxamine + pyruvate = pyridoxal + L-alanine. In terms of biological role, catalyzes a reversible transamination reaction between pyridoxamine and pyruvate to form pyridoxal and L-alanine. The sequence is that of Pyridoxamine--pyruvate transaminase (ppaT) from Mesorhizobium japonicum (strain LMG 29417 / CECT 9101 / MAFF 303099) (Mesorhizobium loti (strain MAFF 303099)).